The following is a 251-amino-acid chain: tRNA-cytidine(32) 2-sulfurtransferase 1 (251 aa).

A PP-loop motif motif is present at residues 33-38 (SGGKDS). Positions 108, 111, and 199 each coordinate [4Fe-4S] cluster.

It belongs to the TtcA family. As to quaternary structure, homodimer. It depends on Mg(2+) as a cofactor. [4Fe-4S] cluster is required as a cofactor.

It localises to the cytoplasm. It carries out the reaction cytidine(32) in tRNA + S-sulfanyl-L-cysteinyl-[cysteine desulfurase] + AH2 + ATP = 2-thiocytidine(32) in tRNA + L-cysteinyl-[cysteine desulfurase] + A + AMP + diphosphate + H(+). It participates in tRNA modification. In terms of biological role, catalyzes the ATP-dependent 2-thiolation of cytidine in position 32 of tRNA, to form 2-thiocytidine (s(2)C32). The sulfur atoms are provided by the cysteine/cysteine desulfurase (IscS) system. In Francisella tularensis subsp. holarctica (strain FTNF002-00 / FTA), this protein is tRNA-cytidine(32) 2-sulfurtransferase 1.